A 201-amino-acid chain; its full sequence is Small ribosomal subunit protein uS4c (201 aa).

Residues 20–44 are disordered; the sequence is GLTSKRPRAGSDLRNQSRSGKKSQY. The S4 RNA-binding domain maps to 89-152; sequence MRLDNILFRL…NSRTLVQNLL (64 aa).

Belongs to the universal ribosomal protein uS4 family. In terms of assembly, part of the 30S ribosomal subunit. Contacts protein S5. The interaction surface between S4 and S5 is involved in control of translational fidelity.

It localises to the plastid. The protein localises to the chloroplast. In terms of biological role, one of the primary rRNA binding proteins, it binds directly to 16S rRNA where it nucleates assembly of the body of the 30S subunit. With S5 and S12 plays an important role in translational accuracy. In Aethionema cordifolium (Lebanon stonecress), this protein is Small ribosomal subunit protein uS4c (rps4).